The primary structure comprises 308 residues: Glutaminase (308 aa).

The substrate site is built by S66, N117, E161, N168, Y192, Y244, and V262.

It belongs to the glutaminase family. As to quaternary structure, homotetramer.

The catalysed reaction is L-glutamine + H2O = L-glutamate + NH4(+). The sequence is that of Glutaminase from Salmonella agona (strain SL483).